Here is a 271-residue protein sequence, read N- to C-terminus: Membrane protein insertase YidC 1 (271 aa).

Residues 1–20 form the signal peptide; sequence MKKKLKTFSLILLTGSLLVA. The N-palmitoyl cysteine moiety is linked to residue C21. The S-diacylglycerol cysteine moiety is linked to residue C21. A run of 4 helical transmembrane segments spans residues 45-65, 124-144, 163-183, and 201-221; these read IQWL…TLII, YASV…FQAL, PDPY…STWL, and VMPF…VLYW.

It belongs to the OXA1/ALB3/YidC family. Type 2 subfamily.

The protein resides in the cell membrane. Its function is as follows. Required for the insertion and/or proper folding and/or complex formation of integral membrane proteins into the membrane. Involved in integration of membrane proteins that insert both dependently and independently of the Sec translocase complex, as well as at least some lipoproteins. The protein is Membrane protein insertase YidC 1 of Streptococcus agalactiae serotype V (strain ATCC BAA-611 / 2603 V/R).